Consider the following 501-residue polypeptide: Phosphatase and actin regulator 1 (501 aa).

One copy of the RPEL 1 repeat lies at 1 to 18 (MRQSREELIKRGVLKEIF). Disordered regions lie at residues 21 to 46 (DGELSIPNEEGALENGQPLGSGQVLS) and 295 to 329 (DNKENVPHEADYEDSSCLYPRQEEEEEEDEDEDNS). Low complexity predominate over residues 36–46 (GQPLGSGQVLS). The span at 295-304 (DNKENVPHEA) shows a compositional bias: basic and acidic residues. A compositionally biased stretch (acidic residues) spans 317 to 328 (EEEEEEDEDEDN). 3 RPEL repeats span residues 343 to 368 (DSLAIKLSNRPSKRELEEKNILPMQT), 381 to 406 (TKLTRRLSQRPTAEELEQRNILKPRN), and 419 to 444 (RRLTRKLSQRPTVEELRERKILIRFS). The tract at residues 382–415 (KLTRRLSQRPTAEELEQRNILKPRNEQEEQEEKR) is disordered. Over residues 392 to 415 (TAEELEQRNILKPRNEQEEQEEKR) the composition is skewed to basic and acidic residues.

The protein belongs to the phosphatase and actin regulator family. Interacts (via RPEL repeats) with ACTA1. Expressed in the gizzard, and in neurons from central and peripheral nervous systems.

The protein localises to the cytoplasm. Its subcellular location is the synapse. It localises to the nucleus. Functionally, binds actin monomers (G actin) and plays a role in the reorganization of the actin cytoskeleton and in formation of actin stress fibers. In Gallus gallus (Chicken), this protein is Phosphatase and actin regulator 1 (PHACTR1).